The sequence spans 670 residues: Major fimbrium tip subunit FimD (670 aa).

Residues 1–24 (MRTNRILNIICPPILFLLVGFLFG) form the signal peptide. The N-palmitoyl cysteine moiety is linked to residue Cys-25. Cys-25 carries S-diacylglycerol cysteine lipidation. Residues 25-50 (CVREDIESDMNETSSLFLQVQPYNQR) constitute a propeptide that is removed on maturation.

It belongs to the FimD family. As to quaternary structure, fimbriae are composed of a major, structural subunit and the minor components FimC, FimD and FimE. Identified in a complex composed of FimC, FimD and FimE (in vitro). The complex interacts with host extracellular matrix proteins, including fibronectin and type I collagen. Interacts with host CXCR4.

The protein localises to the fimbrium. It is found in the cell outer membrane. Functionally, probably a component of the fimbrium tip. These long, filamentous pili are attached to the cell surface; they mediate biofilm formation, adhesion onto host cells and onto other bacteria that are part of the oral microbiome. They play an important role in invasion of periodontal tissues and are major virulence factors. FimC, FimD and FimE contribute to interaction with host CXCR4 and thereby down-regulate the TLR2-mediated host immune response. This is Major fimbrium tip subunit FimD from Porphyromonas gingivalis (strain ATCC 33277 / DSM 20709 / CIP 103683 / JCM 12257 / NCTC 11834 / 2561).